A 512-amino-acid chain; its full sequence is Maturase K (512 aa).

It belongs to the intron maturase 2 family. MatK subfamily.

It is found in the plastid. Its subcellular location is the chloroplast. Its function is as follows. Usually encoded in the trnK tRNA gene intron. Probably assists in splicing its own and other chloroplast group II introns. The sequence is that of Maturase K from Lilium canadense (Canada lily).